The following is a 189-amino-acid chain: Peptidyl-tRNA hydrolase (189 aa).

TRNA is bound at residue tyrosine 15. Histidine 20 acts as the Proton acceptor in catalysis. 3 residues coordinate tRNA: phenylalanine 66, asparagine 68, and asparagine 114.

Belongs to the PTH family. Monomer.

The protein resides in the cytoplasm. It carries out the reaction an N-acyl-L-alpha-aminoacyl-tRNA + H2O = an N-acyl-L-amino acid + a tRNA + H(+). Functionally, hydrolyzes ribosome-free peptidyl-tRNAs (with 1 or more amino acids incorporated), which drop off the ribosome during protein synthesis, or as a result of ribosome stalling. Its function is as follows. Catalyzes the release of premature peptidyl moieties from peptidyl-tRNA molecules trapped in stalled 50S ribosomal subunits, and thus maintains levels of free tRNAs and 50S ribosomes. The chain is Peptidyl-tRNA hydrolase from Dichelobacter nodosus (strain VCS1703A).